We begin with the raw amino-acid sequence, 371 residues long: Protein lifeguard 1 (371 aa).

The tract at residues 1 to 145 (MSHEKSFLVS…EGPPSYYDNQ (145 aa)) is disordered. Residues 14 to 49 (YPPPNPGYPGGPQPPMPPYAQPPYPGAPYPQPPFQP) show a composition bias toward pro residues. Residues 84–98 (YPQEGYPQGPYPQGG) show a composition bias toward low complexity. Over residues 102 to 114 (GPYPQSPFPPNPY) the composition is skewed to pro residues. Helical transmembrane passes span 165 to 185 (VFLV…VFTF), 197 to 217 (VWTY…LSCC), 228 to 248 (LVAL…IASF), 253 to 273 (AVIM…IFSM), 283 to 303 (MGVL…CIFI), 307 to 327 (ILEI…LAVD), and 346 to 366 (FAAL…LTII).

Belongs to the BI1 family. LFG subfamily.

The protein resides in the membrane. Potential apoptotic regulator. The protein is Protein lifeguard 1 (GRINA) of Homo sapiens (Human).